The primary structure comprises 42 residues: Lanthionine-containing peptide SapB precursor RamS (42 aa).

The propeptide occupies 1–21 (MNLFDLQSMETPKEEAMGDVE). The disordered stretch occupies residues 1 to 21 (MNLFDLQSMETPKEEAMGDVE). 2 cross-links (lanthionine (Ser-Cys)) span residues 24-31 (SRASLLLC) and 34-41 (SSLSITTC). A 2,3-didehydroalanine (Ser) mark is found at Ser27 and Ser37.

This sequence belongs to the lanthionine-containing morphogen family. In terms of processing, maturation involves the enzymatic conversion of Ser into dehydrated AA and the formation of thioether bonds with cysteine, probably by RamC. This is followed by membrane translocation and cleavage of the modified precursor. The RamS precursor protein (detected by an anti-propeptide antibody and by a C-terminal His-tag) is detected from at least 16 hours post-germination; its apparent molecular weight decreases starting from about 34 hours, when its probable modifying enzyme ramC is transcribed. Surfactin, a B.subtilis cyclic lipopeptide antibiotic which prevents aerial hyphae formation in S.coelicolor, decreases localization of RamS precursor protein to the cell membrane, suggesting that processing only occurs at the cell membrane.

It is found in the cell membrane. It localises to the secreted. Its subcellular location is the spore wall. In terms of biological role, stably accumulated precursor of SapB. Its function is as follows. Lanthionine-containing peptide devoid of antibiotic properties. A surface active peptide involved in the efficient formation of aerial mycelium when cells are grown in rich media. Has an overlapping function with the surface-active chaplin proteins; chaplins are essential on minimal medium while on rich medium both chaplins and SapB are required for efficient aerial hyphae formation. Required under conditions of high osmolarity where it may change the physical properties of the chaplin layer to allow hyphae to grow into air. Suggested to self-assemble at air-water interfaces, thus providing a film of surfactant through which nascent aerial hyphae can emerge; the aerial hyphae differentiate further into spores. Application to bald mutants (bld, unable to make aerial hyphae) restores hyphae growth. Application to chaplin negative mutants as well as ramC-ramS-ramA-ramB and ramR deletions also restores aerial hyphae growth and sporulation. Reduces surface tension of water from 72 to 30 mJ/m(2). This Streptomyces coelicolor (strain ATCC BAA-471 / A3(2) / M145) protein is Lanthionine-containing peptide SapB precursor RamS (ramS).